We begin with the raw amino-acid sequence, 103 residues long: Large ribosomal subunit protein bL21 (103 aa).

The protein belongs to the bacterial ribosomal protein bL21 family. Part of the 50S ribosomal subunit. Contacts protein L20.

Functionally, this protein binds to 23S rRNA in the presence of protein L20. This is Large ribosomal subunit protein bL21 from Cupriavidus necator (strain ATCC 17699 / DSM 428 / KCTC 22496 / NCIMB 10442 / H16 / Stanier 337) (Ralstonia eutropha).